The primary structure comprises 238 residues: uncharacterized protein (238 aa).

The next 5 membrane-spanning stretches (helical) occupy residues 6 to 26 (METL…ALMI), 45 to 65 (FILL…FFIL), 98 to 118 (IPIL…IGYI), 160 to 180 (IFGT…GYLL), and 186 to 206 (IVLC…LVGA).

Belongs to the TMEM19 family.

Its subcellular location is the cell membrane. This is an uncharacterized protein from Methanocaldococcus jannaschii (strain ATCC 43067 / DSM 2661 / JAL-1 / JCM 10045 / NBRC 100440) (Methanococcus jannaschii).